The following is a 290-amino-acid chain: Porphobilinogen deaminase (290 aa).

C238 carries the S-(dipyrrolylmethanemethyl)cysteine modification.

Belongs to the HMBS family. As to quaternary structure, monomer. Dipyrromethane is required as a cofactor.

It carries out the reaction 4 porphobilinogen + H2O = hydroxymethylbilane + 4 NH4(+). The protein operates within porphyrin-containing compound metabolism; protoporphyrin-IX biosynthesis; coproporphyrinogen-III from 5-aminolevulinate: step 2/4. In terms of biological role, tetrapolymerization of the monopyrrole PBG into the hydroxymethylbilane pre-uroporphyrinogen in several discrete steps. The polypeptide is Porphobilinogen deaminase (Clostridium botulinum (strain Eklund 17B / Type B)).